We begin with the raw amino-acid sequence, 446 residues long: Probable E3 ubiquitin-protein ligase XBOS31 (446 aa).

5 ANK repeats span residues 46–75 (DRFT…DVDV), 79–108 (KKQT…NVLT), 113–142 (RART…QAQG), 160–189 (RGAT…IVSA), and 197–227 (PGST…RLQR). The RING-type zinc finger occupies 317–366 (CNICFEQACSMEVKECGHQMCAACTLAICCHSKPNPKTLLLHPPACPFCR). The segment at 376 to 401 (TTNSNKTNSRRRSRSRSSSFKGGLSS) is disordered.

The catalysed reaction is S-ubiquitinyl-[E2 ubiquitin-conjugating enzyme]-L-cysteine + [acceptor protein]-L-lysine = [E2 ubiquitin-conjugating enzyme]-L-cysteine + N(6)-ubiquitinyl-[acceptor protein]-L-lysine.. It participates in protein modification; protein ubiquitination. The polypeptide is Probable E3 ubiquitin-protein ligase XBOS31 (XBOS31) (Oryza sativa subsp. japonica (Rice)).